The sequence spans 361 residues: 5-formaminoimidazole-4-carboxamide-1-(beta)-D-ribofuranosyl 5'-monophosphate synthetase (361 aa).

Residues histidine 27 and serine 94 each coordinate 5-amino-1-(5-phospho-beta-D-ribosyl)imidazole-4-carboxamide. One can recognise an ATP-grasp domain in the interval 116–348 (RQILRWEAER…MGQRIAKEIK (233 aa)). Residues 146–208 (PDEI…TNYC) and glutamate 230 each bind ATP. Position 258 (asparagine 258) interacts with 5-amino-1-(5-phospho-beta-D-ribosyl)imidazole-4-carboxamide. Residues glutamine 297 and glutamate 310 each coordinate Mg(2+).

Belongs to the phosphohexose mutase family. Requires Mg(2+) as cofactor. The cofactor is Mn(2+).

It carries out the reaction 5-amino-1-(5-phospho-beta-D-ribosyl)imidazole-4-carboxamide + formate + ATP = 5-formamido-1-(5-phospho-D-ribosyl)imidazole-4-carboxamide + ADP + phosphate. Its pathway is purine metabolism; IMP biosynthesis via de novo pathway; 5-formamido-1-(5-phospho-D-ribosyl)imidazole-4-carboxamide from 5-amino-1-(5-phospho-D-ribosyl)imidazole-4-carboxamide (formate route): step 1/1. Its function is as follows. Catalyzes the ATP- and formate-dependent formylation of 5-aminoimidazole-4-carboxamide-1-beta-d-ribofuranosyl 5'-monophosphate (AICAR) to 5-formaminoimidazole-4-carboxamide-1-beta-d-ribofuranosyl 5'-monophosphate (FAICAR) in the absence of folates. In Methanococcus aeolicus (strain ATCC BAA-1280 / DSM 17508 / OCM 812 / Nankai-3), this protein is 5-formaminoimidazole-4-carboxamide-1-(beta)-D-ribofuranosyl 5'-monophosphate synthetase.